The sequence spans 897 residues: Interleukin enhancer-binding factor 3 (897 aa).

The DZF domain occupies 5–378; sequence RIFVNDDRHV…PMKRPMEEDG (374 aa). The tract at residues 52–85 is disordered; sequence QEKGNSELSEAENMDTPPDDESKEGAGEQKAEHM. Acidic residues predominate over residues 60 to 73; sequence SEAENMDTPPDDES. T67 is subject to Phosphothreonine. A compositionally biased stretch (basic and acidic residues) spans 74 to 85; the sequence is KEGAGEQKAEHM. Residue K100 is modified to N6-acetyllysine. T188 bears the Phosphothreonine; by PKR mark. S190 bears the Phosphoserine mark. A Glycyl lysine isopeptide (Lys-Gly) (interchain with G-Cter in ubiquitin) cross-link involves residue K297. The residue at position 315 (T315) is a Phosphothreonine; by PKR. A Glycyl lysine isopeptide (Lys-Gly) (interchain with G-Cter in SUMO1) cross-link involves residue K348. Residues 363 to 401 are disordered; the sequence is TTYAITPMKRPMEEDGEEKSPSKKKKKIQKKEEKAEPPQ. The Bipartite nuclear localization signal signature appears at 371–389; the sequence is KRPMEEDGEEKSPSKKKKK. Over residues 372 to 383 the composition is skewed to basic and acidic residues; the sequence is RPMEEDGEEKSP. Phosphoserine is present on residues S382 and S384. A Glycyl lysine isopeptide (Lys-Gly) (interchain with G-Cter in SUMO2) cross-link involves residue K396. A DRBM 1 domain is found at 398–467; that stretch reads EPPQAMNALM…AVKVLQDMGL (70 aa). K460 is subject to N6-acetyllysine. Disordered regions lie at residues 466-524, 624-662, and 720-897; these read GLPT…LTKH, GMGGPMHNEAPPPPNIRGRGRGGNIRGRGRGRGFGGTNH, and GDSY…YQYR. Basic and acidic residues predominate over residues 472–481; the sequence is EGRDSSKGED. Phosphoserine is present on residues S476, S477, S482, and S486. A Glycyl lysine isopeptide (Lys-Gly) (interchain with G-Cter in SUMO2) cross-link involves residue K489. Low complexity predominate over residues 499 to 508; that stretch reads VEAVSNPSSV. The 67-residue stretch at 524-590 folds into the DRBM 2 domain; sequence HGKNPVMELN…ALAALEKLFP (67 aa). The interval 609-897 is interaction with PRMT1; the sequence is RGGPKFAAKP…TEHSMNYQYR (289 aa). Gly residues predominate over residues 644–662; that stretch reads RGGNIRGRGRGRGFGGTNH. Composition is skewed to low complexity over residues 745 to 769, 783 to 794, and 802 to 812; these read SYSSGYQSHQGQQQPYNQSQYSSYG, GSYSSYSNSYNS, and DYSYDSKFNYS. 4 positions are modified to phosphoserine: S794, S812, S814, and S818. Residues 813–822 show a composition bias toward gly residues; sequence GSGGRSGGNS. Residues 823 to 833 show a composition bias toward low complexity; sequence YGSSGSSYNTG. The span at 834 to 844 shows a compositional bias: gly residues; it reads SHGGYGAGSGG. Positions 845–885 are enriched in low complexity; that stretch reads SSSYQGKQGGYSSQSNYSSPGSSQSYSGPASSYQSSQGGYS.

In terms of assembly, identified in a IGF2BP1-dependent mRNP granule complex containing untranslated mRNAs. Interacts with FUS and SMN. Interacts (via C-terminus) with PRMT1. Forms a complex with ILF2. Can also bind to PRKDC/XRCC7: this may stabilize the interaction of PRKDC/XRCC7 and the heterodimeric complex of XRCC6/KU70 and XRCC5/KU80. Forms a heteromeric complex with ZNF346 and ILF3. Found in a nuclear export complex with XPO5, ILF3, Ran and double-stranded RNA or double-stranded minihelix VA1 RNA. Found in a nuclear export complex with XPO5, RAN, ILF3, ZNF346 and double-stranded RNA. Interacts with XPO5 and ZNF346. Forms a complex with ILF2, YLPM1, KHDRBS1, RBMX, NCOA5 and PPP1CA. Interacts with AGO1 and AGO2. Interacts with DHX36; this interaction occurs in a RNA-dependent manner. Interacts with ELAVL1; this interaction occurs in a RNA-dependent manner. Interacts with HAVCR2; this interaction promotes ILF3 ubiquitination and subsequent degradation. Post-translationally, phosphorylated at Thr-188 and Thr-315 by PKR in response to RNA viruses. This phosphorylation results in the dissociation of ILF2 from the ILF2-ILF3 complex resulting in a cytoplasmic sequestration of ILF3 where it can bind to viral RNAs and impede viral replication. Methylated by protein arginine N-methyltransferase 1.

Its subcellular location is the nucleus. It is found in the nucleolus. The protein localises to the cytoplasm. Functionally, RNA-binding protein that plays an essential role in the biogenesis of circular RNAs (circRNAs) which are produced by back-splicing circularization of pre-mRNAs. Within the nucleus, promotes circRNAs processing by stabilizing the regulatory elements residing in the flanking introns of the circularized exons. Plays thereby a role in the back-splicing of a subset of circRNAs. As a consequence, participates in a wide range of transcriptional and post-transcriptional processes. Binds to poly-U elements and AU-rich elements (AREs) in the 3'-UTR of target mRNAs. Upon viral infection, ILF3 accumulates in the cytoplasm and participates in the innate antiviral response. Mechanistically, ILF3 becomes phosphorylated and activated by the double-stranded RNA-activated protein kinase/PKR which releases ILF3 from cellular mature circRNAs. In turn, unbound ILF3 molecules are able to interact with and thus inhibit viral mRNAs. This is Interleukin enhancer-binding factor 3 (Ilf3) from Rattus norvegicus (Rat).